We begin with the raw amino-acid sequence, 864 residues long: DNA mismatch repair protein MutS (864 aa).

An ATP-binding site is contributed by 613-620 (GPNMGGKS).

The protein belongs to the DNA mismatch repair MutS family.

Its function is as follows. This protein is involved in the repair of mismatches in DNA. It is possible that it carries out the mismatch recognition step. This protein has a weak ATPase activity. In Actinobacillus pleuropneumoniae serotype 3 (strain JL03), this protein is DNA mismatch repair protein MutS.